Here is a 214-residue protein sequence, read N- to C-terminus: Orotate phosphoribosyltransferase (214 aa).

Lys26 serves as a coordination point for 5-phospho-alpha-D-ribose 1-diphosphate. 34–35 is a binding site for orotate; the sequence is FF. 5-phospho-alpha-D-ribose 1-diphosphate is bound by residues 72–73, Arg99, Lys100, Lys103, His105, and 124–132; these read YK and DDVITAGTA. 2 residues coordinate orotate: Thr128 and Arg156.

This sequence belongs to the purine/pyrimidine phosphoribosyltransferase family. PyrE subfamily. As to quaternary structure, homodimer. It depends on Mg(2+) as a cofactor.

The catalysed reaction is orotidine 5'-phosphate + diphosphate = orotate + 5-phospho-alpha-D-ribose 1-diphosphate. It functions in the pathway pyrimidine metabolism; UMP biosynthesis via de novo pathway; UMP from orotate: step 1/2. Catalyzes the transfer of a ribosyl phosphate group from 5-phosphoribose 1-diphosphate to orotate, leading to the formation of orotidine monophosphate (OMP). The sequence is that of Orotate phosphoribosyltransferase from Mannheimia succiniciproducens (strain KCTC 0769BP / MBEL55E).